The primary structure comprises 185 residues: Ribosome-recycling factor (185 aa).

This sequence belongs to the RRF family.

It localises to the cytoplasm. Its function is as follows. Responsible for the release of ribosomes from messenger RNA at the termination of protein biosynthesis. May increase the efficiency of translation by recycling ribosomes from one round of translation to another. This is Ribosome-recycling factor from Vibrio cholerae serotype O1 (strain ATCC 39541 / Classical Ogawa 395 / O395).